A 455-amino-acid polypeptide reads, in one-letter code: Adenylyltransferase and sulfurtransferase MOCS3 (455 aa).

ATP-binding positions include Gly-90, Asp-111, 118–122, Lys-135, and 179–180; these read SNLAR and DN. Residues 156–236 form an interaction with NFS1 region; the sequence is AQALTPATAL…RPPPAETVTS (81 aa). Residues Cys-220 and Cys-223 each contribute to the Zn(2+) site. Cys-237 acts as the Glycyl thioester intermediate; for adenylyltransferase activity in catalysis. Zn(2+) contacts are provided by Cys-295 and Cys-298. A disulfide bridge links Cys-314 with Cys-322. One can recognise a Rhodanese domain in the interval 345–453; sequence SRSPHLLLDV…WAAKIDGTFP (109 aa). Catalysis depends on Cys-410, which acts as the Cysteine persulfide intermediate; for sulfurtransferase activity. Cys-410 carries the cysteine persulfide modification.

This sequence in the N-terminal section; belongs to the HesA/MoeB/ThiF family. UBA4 subfamily. As to quaternary structure, interacts with NFS1. The cofactor is Zn(2+).

The protein resides in the cytoplasm. It is found in the cytosol. The catalysed reaction is [molybdopterin-synthase sulfur-carrier protein]-C-terminal Gly-Gly + ATP + H(+) = [molybdopterin-synthase sulfur-carrier protein]-C-terminal Gly-Gly-AMP + diphosphate. It catalyses the reaction [molybdopterin-synthase sulfur-carrier protein]-C-terminal Gly-Gly-AMP + S-sulfanyl-L-cysteinyl-[cysteine desulfurase] + AH2 = [molybdopterin-synthase sulfur-carrier protein]-C-terminal-Gly-aminoethanethioate + L-cysteinyl-[cysteine desulfurase] + A + AMP + 2 H(+). It functions in the pathway tRNA modification; 5-methoxycarbonylmethyl-2-thiouridine-tRNA biosynthesis. Its pathway is cofactor biosynthesis; molybdopterin biosynthesis. Its function is as follows. Plays a central role in 2-thiolation of mcm(5)S(2)U at tRNA wobble positions of cytosolic tRNA(Lys), tRNA(Glu) and tRNA(Gln). Also essential during biosynthesis of the molybdenum cofactor. Acts by mediating the C-terminal thiocarboxylation of sulfur carriers URM1 and MOCS2A. Its N-terminus first activates URM1 and MOCS2A as acyl-adenylates (-COAMP), then the persulfide sulfur on the catalytic cysteine is transferred to URM1 and MOCS2A to form thiocarboxylation (-COSH) of their C-terminus. The reaction probably involves hydrogen sulfide that is generated from the persulfide intermediate and that acts as a nucleophile towards URM1 and MOCS2A. Subsequently, a transient disulfide bond is formed. Does not use thiosulfate as sulfur donor; NFS1 acting as a sulfur donor for thiocarboxylation reactions. This Bos taurus (Bovine) protein is Adenylyltransferase and sulfurtransferase MOCS3.